Here is a 1512-residue protein sequence, read N- to C-terminus: METKVGKQKKRSVDSNDDVSKERRPKRAAACRNFKEKPLRISDKSETVEAKKEQNVVEEIVAIQLTSSLESNDDPRPNRRLTDFVLHNSDGVPQPVEMLELGDIFLEGVVLPLGDDKNEEKGVRFQSFGRVENWNISGYEDGSPGIWISTALADYDCRKPASKYKKIYDYFFEKACACVEVFKSLSKNPDTSLDELLAAVARSMSGSKIFSSGGAIQEFVISQGEFIYNQLAGLDETAKNHETCFVENSVLVSLRDHESSKIHKALSNVALRIDESQLVKSDHLVDGAEAEDVRYAKLIQEEEYRISMERSRNKRSSTTSASNKFYIKINEHEIANDYPLPSYYKNTKEETDELLLFEPGYEVDTRDLPCRTLHNWALYNSDSRMISLEVLPMRPCAEIDVTVFGSGVVAEDDGSGFCLDDSESSTSTQSNVHDGMNIFLSQIKEWMIEFGAEMIFVTLRTDMAWYRLGKPSKQYAPWFETVMKTVRVAISIFNMLMRESRVAKLSYANVIKRLCGLEENDKAYISSKLLDVERYVVVHGQIILQLFEEYPDKDIKRCPFVTGLASKMQDIHHTKWIIKRKKKILQKGKNLNPRAGLAHVVTRMKPMQATTTRLVNRIWGEFYSIYSPEVPSEAIHEVEEEEIEEDEEEDENEEDDIEEEAVEVQKSHTPKKSRGNSEDMEIKWNGEILGETSDGEPLYGRALVGGETVAVGSAVILEVDDPDETPAIYFVEFMFESSDQCKMLHGKLLQRGSETVIGTAANERELFLTNECLTVHLKDIKGTVSLDIRSRPWGHQYRKENLVVDKLDRARAEERKANGLPTEYYCKSLYSPERGGFFSLPRNDIGLGSGFCSSCKIKEEEEERSKTKLNISKTGVFSNGIEYYNGDFVYVLPNYITKDGLKKGTSRRTTLKCGRNVGLKAFVVCQLLDVIVLEESRKASNASFQVKLTRFYRPEDISEEKAYASDIQELYYSHDTYILPPEALQGKCEVRKKNDMPLCREYPILDHIFFCEVFYDSSTGYLKQFPANMKLKFSTIKDETLLREKKGKGVETGTSSGILMKPDEVPKEMRLATLDIFAGCGGLSHGLEKAGVSNTKWAIEYEEPAGHAFKQNHPEATVFVDNCNVILRAIMEKCGDVDDCVSTVEAAELVAKLDENQKSTLPLPGQADFISGGPPCQGFSGMNRFSDGSWSKVQCEMILAFLSFADYFRPKYFLLENVKKFVTYNKGRTFQLTMASLLEIGYQVRFGILEAGTYGVSQPRKRVIIWAASPEEVLPEWPEPMHVFDNPGSKISLPRGLHYDTVRNTKFGAPFRSITVRDTIGDLPLVENGESKINKEYRTTPVSWFQKKIRGNMSVLTDHICKGLNELNLIRCKKIPKRPGADWRDLPDENVTLSNGLVEKLRPLALSKTAKNHNEWKGLYGRLDWQGNLPISITDPQPMGKVGMCFHPEQDRIITVRECARSQGFPDSYEFSGTTKHKHRQIGNAVPPPLAFALGRKLKEALYLKSSLQHQS.

Residues 1–22 (METKVGKQKKRSVDSNDDVSKE) show a composition bias toward basic and acidic residues. Disordered regions lie at residues 1 to 35 (METK…RNFK) and 634 to 678 (AIHE…GNSE). The segment covering 638 to 662 (VEEEEIEEDEEEDENEEDDIEEEAV) has biased composition (acidic residues). BAH domains lie at 707–841 (ETVA…FSLP) and 909–1026 (TTLK…KQFP). Residues 1071–1505 (LATLDIFAGC…RKLKEALYLK (435 aa)) enclose the SAM-dependent MTase C5-type domain. C1176 is an active-site residue.

This sequence belongs to the class I-like SAM-binding methyltransferase superfamily. C5-methyltransferase family. As to expression, expressed at low levels in vegetative and floral organs.

The protein localises to the nucleus. It carries out the reaction a 2'-deoxycytidine in DNA + S-adenosyl-L-methionine = a 5-methyl-2'-deoxycytidine in DNA + S-adenosyl-L-homocysteine + H(+). Functionally, maintains chromatin CpG methylation that plays a role in genomic imprinting, regulation of embryogenesis and seed viability. Required for proper patterns of CG DNA methylation in dividing cells. The protein is DNA (cytosine-5)-methyltransferase 2 (MET2) of Arabidopsis thaliana (Mouse-ear cress).